The chain runs to 513 residues: Activin receptor type-2B (513 aa).

A signal peptide spans 1–18; that stretch reads MTAPWAALALLWGSLCAG. At 19-137 the chain is on the extracellular side; sequence SGRGEAETRE…PPPTAPTLLT (119 aa). 5 cysteine pairs are disulfide-bonded: C29–C59, C49–C77, C84–C103, C90–C102, and C104–C109. N-linked (GlcNAc...) asparagine glycosylation is found at N42 and N65. A helical membrane pass occupies residues 138 to 158; sequence VLAYSLLPIGGLSLIVLLAFW. Residues 159–513 lie on the Cytoplasmic side of the membrane; it reads MYRHRKPPYG…VDLLPKESSI (355 aa). In terms of domain architecture, Protein kinase spans 190-481; that stretch reads LQLLEIKARG…AGCVEERVSL (292 aa). ATP-binding positions include 196-204 and K217; that span reads KARGRFGCV. The active-site Proton acceptor is D322. Residues 492-513 are interaction with DYNLT1; that stretch reads DCLVSLVTSVTNVDLLPKESSI.

The protein belongs to the protein kinase superfamily. TKL Ser/Thr protein kinase family. TGFB receptor subfamily. In terms of assembly, forms an activin receptor complex with activin type II receptors such as ACVR1B. Interacts with VPS39. Interacts with DYNLT1. Interacts with BMP3. Interacts with BMP2. The cofactor is Mg(2+). Mn(2+) serves as cofactor. Post-translationally, phosphorylated. Constitutive phosphorylation is in part catalyzed by its own kinase activity.

The protein localises to the cell membrane. It catalyses the reaction L-threonyl-[receptor-protein] + ATP = O-phospho-L-threonyl-[receptor-protein] + ADP + H(+). The catalysed reaction is L-seryl-[receptor-protein] + ATP = O-phospho-L-seryl-[receptor-protein] + ADP + H(+). Transmembrane serine/threonine kinase activin type-2 receptor forming an activin receptor complex with activin type-1 serine/threonine kinase receptors (ACVR1, ACVR1B or ACVR1c). Transduces the activin signal from the cell surface to the cytoplasm and is thus regulating many physiological and pathological processes including neuronal differentiation and neuronal survival, hair follicle development and cycling, FSH production by the pituitary gland, wound healing, extracellular matrix production, immunosuppression and carcinogenesis. Activin is also thought to have a paracrine or autocrine role in follicular development in the ovary. Within the receptor complex, the type-2 receptors act as a primary activin receptors (binds activin-A/INHBA, activin-B/INHBB as well as inhibin-A/INHA-INHBA). The type-1 receptors like ACVR1B act as downstream transducers of activin signals. Activin binds to type-2 receptor at the plasma membrane and activates its serine-threonine kinase. The activated receptor type-2 then phosphorylates and activates the type-1 receptor. Once activated, the type-1 receptor binds and phosphorylates the SMAD proteins SMAD2 and SMAD3, on serine residues of the C-terminal tail. Soon after their association with the activin receptor and subsequent phosphorylation, SMAD2 and SMAD3 are released into the cytoplasm where they interact with the common partner SMAD4. This SMAD complex translocates into the nucleus where it mediates activin-induced transcription. Inhibitory SMAD7, which is recruited to ACVR1B through FKBP1A, can prevent the association of SMAD2 and SMAD3 with the activin receptor complex, thereby blocking the activin signal. Activin signal transduction is also antagonized by the binding to the receptor of inhibin-B via the IGSF1 inhibin coreceptor. This is Activin receptor type-2B (Acvr2b) from Rattus norvegicus (Rat).